A 469-amino-acid polypeptide reads, in one-letter code: 3-isopropylmalate dehydratase large subunit (469 aa).

[4Fe-4S] cluster is bound by residues C347, C408, and C411.

This sequence belongs to the aconitase/IPM isomerase family. LeuC type 1 subfamily. As to quaternary structure, heterodimer of LeuC and LeuD. The cofactor is [4Fe-4S] cluster.

The enzyme catalyses (2R,3S)-3-isopropylmalate = (2S)-2-isopropylmalate. It participates in amino-acid biosynthesis; L-leucine biosynthesis; L-leucine from 3-methyl-2-oxobutanoate: step 2/4. Its function is as follows. Catalyzes the isomerization between 2-isopropylmalate and 3-isopropylmalate, via the formation of 2-isopropylmaleate. The chain is 3-isopropylmalate dehydratase large subunit from Actinobacillus pleuropneumoniae serotype 3 (strain JL03).